The sequence spans 1095 residues: MNRSGISKKRPPPSNTPPPAGKHRATGDSTPSPAIGTLDDEFMMEEDVFLDETLLYGDEDEESLILRDIEERESRSSAWARPPLSPAYLSNSQSIIFQQLEIDSIIAESHKELLPGSSGQAPIIRMFGVTREGNSVCCFVHGFEPYFYIACPPGMGPDDISNFHQSLEGRMRESNKNAKVPKFVKRIEMVQKRSIMYYQQQKSQTFLKITVALPTMVASCRGILDRGLQIDGLGMKSFQTYESNILFVLRFMVDCDIVGGNWIEVPTGKYKKNARTLSYCQLEFHCLYSDLISHAAEGEYSKMAPFRVLSFDIECAGRKGHFPEAKHDPVIQIANLVTLQGEDHPFVRNVMTLKSCAPIVGVDVMSFETEREVLLAWRDLIRDVDPDIIIGYNICKFDLPYLIERAATLGIEEFPLLGRVKNSRVRVRDSTFSSRQQGIRESKETTIEGRFQFDLIQAIHRDHKLSSYSLNSVSAHFLSEQKEDVHHSIITDLQNGNAETRRRLAVYCLKDAYLPQRLLDKLMFIYNYVEMARVTGVPISFLLARGQSIKVLSQLLRKGKQKNLVLPNAKQSGSEQGTYEGATVLEARTGFYEKPIATLDFASLYPSIMMAYNLCYCTLVTPEDVRKLNLPPEHVTKTPSGETFVKQTLQKGILPEILEELLTARKRAKADLKEAKDPLEKAVLDGRQLALKISANSVYGFTGATVGQLPCLEISSSVTSYGRQMIEQTKKLVEDKFTTLGGYQYNAEVIYGDTDSVMVQFGVSDVEAAMTLGREAAEHISGTFIKPIKLEFEKVYFPYLLINKKRYAGLLWTNPQQFDKMDTKGIETVRRDNCLLVKNLVTESLNKILIDRDVPGAAENVKKTISDLLMNRIDLSLLVITKGLTKTGDDYEVKSAHGELAERMRKRDAATAPNVGDRVPYVIIKAAKGAKAYERSEDPIYVLQNNIPIDPNYYLENQISKPLLRIFEPVLKNASKELLHGSHTRSISITTPSNSGIMKFAKKQLSCVGCKVPISNGTLCASCKGREAELYCKNVSQVAELEEVFGRLWTQCQECQGSLHQDVLCTSRDCPIFYRRMKAQKDMAVARQQLDRWSF.

Positions 1 to 11 (MNRSGISKKRP) are enriched in basic residues. The tract at residues 1-37 (MNRSGISKKRPPPSNTPPPAGKHRATGDSTPSPAIGT) is disordered. Residues Cys-1007, Cys-1010, Cys-1020, and Cys-1023 each coordinate Zn(2+). The segment at 1007–1023 (CVGCKVPISNGTLCASC) adopts a CysA-type zinc-finger fold. [4Fe-4S] cluster is bound by residues Cys-1052, Cys-1055, Cys-1065, and Cys-1070. The short motif at 1052–1070 (CQECQGSLHQDVLCTSRDC) is the CysB motif element.

This sequence belongs to the DNA polymerase type-B family. In terms of assembly, heterodimer with subunits of 125 kDa and 50 kDa. The 125 kDa subunit contains the polymerase active site and most likely the active site for the 3'-5' exonuclease activity. The cofactor is [4Fe-4S] cluster.

The protein resides in the nucleus. It catalyses the reaction DNA(n) + a 2'-deoxyribonucleoside 5'-triphosphate = DNA(n+1) + diphosphate. Its function is as follows. This polymerase possesses two enzymatic activities: DNA synthesis (polymerase) and an exonucleolytic activity that degrades single-stranded DNA in the 3'- to 5'-direction. This Arabidopsis thaliana (Mouse-ear cress) protein is DNA polymerase delta catalytic subunit (POLD1).